Here is a 435-residue protein sequence, read N- to C-terminus: Trigger factor (435 aa).

Positions 161–246 (DDQVTLDFEG…LTKVEEQILP (86 aa)) constitute a PPIase FKBP-type domain.

The protein belongs to the FKBP-type PPIase family. Tig subfamily.

Its subcellular location is the cytoplasm. The enzyme catalyses [protein]-peptidylproline (omega=180) = [protein]-peptidylproline (omega=0). Its function is as follows. Involved in protein export. Acts as a chaperone by maintaining the newly synthesized protein in an open conformation. Functions as a peptidyl-prolyl cis-trans isomerase. This chain is Trigger factor, found in Psychromonas ingrahamii (strain DSM 17664 / CCUG 51855 / 37).